Here is a 113-residue protein sequence, read N- to C-terminus: Hydrogenase maturation factor HypA (113 aa).

Residue His2 coordinates Ni(2+). Residues Cys73, Cys76, Cys89, and Cys92 each contribute to the Zn(2+) site.

The protein belongs to the HypA/HybF family.

Functionally, involved in the maturation of [NiFe] hydrogenases. Required for nickel insertion into the metal center of the hydrogenase. This is Hydrogenase maturation factor HypA from Chlorobium phaeobacteroides (strain BS1).